Consider the following 288-residue polypeptide: T-cell-interacting, activating receptor on myeloid cells protein 1 (288 aa).

Positions 1–16 (MISRLLSLLCLRLCVG) are cleaved as a signal peptide. Over 17–258 (QTDIPENGSP…EGYTVDNLIR (242 aa)) the chain is Extracellular. Ig-like C2-type domains follow at residues 27–113 (PKPS…HPSN) and 124–217 (PQPS…LEIS). Cystine bridges form between Cys49/Cys97 and Cys146/Cys196. Residues Asn74 and Asn185 are each glycosylated (N-linked (GlcNAc...) asparagine). Residues 259–279 (VGVAAAILLIVGGFLVEAWHS) traverse the membrane as a helical segment. The Cytoplasmic portion of the chain corresponds to 280 to 288 (ERLSPNKPW).

As to quaternary structure, interacts with Fc receptor gamma chain FCER1G. In terms of processing, N-glycosylated. In terms of tissue distribution, expressed in lung, uterus, lymph nodes, spleen, thymus and bone marrow. Expressed in bone marrow CD11b(+)Gr-1(+) granulocyte precursors and mature neutrophils.

The protein resides in the cell membrane. Functionally, may act as receptor. Negatively regulates TCR-mediated CD4(+) T cell proliferation and activation, possibly by binding an unknown ligand on the T cell surface. Enhances Toll-like receptor-mediated production of pro-inflammatory cytokines by macrophages and neutrophils. The chain is T-cell-interacting, activating receptor on myeloid cells protein 1 (Tarm1) from Mus musculus (Mouse).